The chain runs to 553 residues: Glucose-6-phosphate isomerase (553 aa).

Glu357 (proton donor) is an active-site residue. Catalysis depends on residues His388 and Lys514. The interval 524–553 (ITGAGSPPPQSDSSTDGLVRRYRTERGRAG) is disordered. The span at 541 to 553 (LVRRYRTERGRAG) shows a compositional bias: basic and acidic residues.

The protein belongs to the GPI family.

It localises to the cytoplasm. It catalyses the reaction alpha-D-glucose 6-phosphate = beta-D-fructose 6-phosphate. Its pathway is carbohydrate biosynthesis; gluconeogenesis. The protein operates within carbohydrate degradation; glycolysis; D-glyceraldehyde 3-phosphate and glycerone phosphate from D-glucose: step 2/4. Functionally, catalyzes the reversible isomerization of glucose-6-phosphate to fructose-6-phosphate. This is Glucose-6-phosphate isomerase from Mycobacterium bovis (strain BCG / Tokyo 172 / ATCC 35737 / TMC 1019).